Reading from the N-terminus, the 314-residue chain is Ribonuclease Z (314 aa).

Zn(2+) contacts are provided by histidine 61, histidine 63, aspartate 65, histidine 66, histidine 137, aspartate 207, and histidine 263. The active-site Proton acceptor is aspartate 65.

Belongs to the RNase Z family. Homodimer. It depends on Zn(2+) as a cofactor.

It catalyses the reaction Endonucleolytic cleavage of RNA, removing extra 3' nucleotides from tRNA precursor, generating 3' termini of tRNAs. A 3'-hydroxy group is left at the tRNA terminus and a 5'-phosphoryl group is left at the trailer molecule.. Functionally, zinc phosphodiesterase, which displays some tRNA 3'-processing endonuclease activity. Probably involved in tRNA maturation, by removing a 3'-trailer from precursor tRNA. This chain is Ribonuclease Z, found in Thermococcus gammatolerans (strain DSM 15229 / JCM 11827 / EJ3).